Here is a 684-residue protein sequence, read N- to C-terminus: Acetyl-coenzyme A synthetase 2 (684 aa).

CoA is bound by residues 207–210 (RGGK) and Thr-326. Residues 402–404 (GEP), 426–431 (DTMWQT), Asp-517, and Arg-532 contribute to the ATP site. CoA is bound at residue Ser-540. Residue Arg-543 participates in ATP binding. Arg-613 is a CoA binding site.

It belongs to the ATP-dependent AMP-binding enzyme family.

The enzyme catalyses acetate + ATP + CoA = acetyl-CoA + AMP + diphosphate. This is Acetyl-coenzyme A synthetase 2 (ACS2) from Kluyveromyces lactis (strain ATCC 8585 / CBS 2359 / DSM 70799 / NBRC 1267 / NRRL Y-1140 / WM37) (Yeast).